A 202-amino-acid chain; its full sequence is Nucleoid occlusion factor SlmA (202 aa).

Residues 14-75 (KERQQQVLEV…ALIERIEQTL (62 aa)) form the HTH tetR-type domain. The H-T-H motif DNA-binding region spans 38 to 57 (TTERLAKAVGVSEGALYRYF).

Belongs to the nucleoid occlusion factor SlmA family. Homodimer. Interacts with FtsZ.

The protein resides in the cytoplasm. The protein localises to the nucleoid. Its function is as follows. Required for nucleoid occlusion (NO) phenomenon, which prevents Z-ring formation and cell division over the nucleoid. Acts as a DNA-associated cell division inhibitor that binds simultaneously chromosomal DNA and FtsZ, and disrupts the assembly of FtsZ polymers. SlmA-DNA-binding sequences (SBS) are dispersed on non-Ter regions of the chromosome, preventing FtsZ polymerization at these regions. The chain is Nucleoid occlusion factor SlmA from Haemophilus ducreyi (strain 35000HP / ATCC 700724).